A 689-amino-acid polypeptide reads, in one-letter code: Protein-glutamine gamma-glutamyltransferase 2 (689 aa).

Catalysis depends on residues C278, H336, and D359. Residues N399, D401, E437, E447, and E452 each contribute to the Ca(2+) site. Residues 427 to 453 form a disordered region; sequence STKSVGRDSREDITHTYKYPEGSEKER. A compositionally biased stretch (basic and acidic residues) spans 431–441; sequence VGRDSREDITH. 476 to 483 provides a ligand contact to GTP; that stretch reads RIKLSEGA. E539 is a binding site for Ca(2+). 580-583 is a binding site for GTP; it reads RDVY.

It belongs to the transglutaminase superfamily. Transglutaminase family. Monomer. Ca(2+) serves as cofactor. In terms of tissue distribution, predominates in mature erythrocytes. Also found in kidney and cardiac muscle.

It localises to the cytoplasm. The protein resides in the cytosol. It is found in the nucleus. The protein localises to the chromosome. Its subcellular location is the secreted. It localises to the extracellular space. The protein resides in the extracellular matrix. It is found in the cell membrane. The protein localises to the mitochondrion. The enzyme catalyses L-glutaminyl-[protein] + L-lysyl-[protein] = [protein]-L-lysyl-N(6)-5-L-glutamyl-[protein] + NH4(+). It carries out the reaction L-glutaminyl-[protein] + serotonin = 5-serotonyl-L-glutamyl-[protein] + NH4(+). The catalysed reaction is L-glutaminyl-[protein] + dopamine = 5-dopaminyl-L-glutamyl-[protein] + NH4(+). It catalyses the reaction L-glutaminyl-[protein] + histamine = 5-histaminyl-L-glutamyl-[protein] + NH4(+). The enzyme catalyses L-glutaminyl-[protein] + (R)-noradrenaline = 5-(R)-noradrenalinyl-L-glutamyl-[protein] + NH4(+). It carries out the reaction L-glutaminyl-[protein] + H2O = L-glutamyl-[protein] + NH4(+). With respect to regulation, acyltransferase activity is regulated by the binding of GTP and Ca(2+): inactivated by GTP, which stabilizes its closed structure, thereby obstructing the accessibility of substrates to the active sites. In contrast, Ca(2+) acts as a cofactor by inducing conformational change to the active open form. In absence of Ca(2+), Mg(2+) may bind Ca(2+)-binding sites, promoting GTP-binding and subsequent inhibition of the acyltransferase activity. Calcium-dependent acyltransferase that catalyzes the formation of covalent bonds between peptide-bound glutamine and various primary amines, such as gamma-amino group of peptide-bound lysine, or mono- and polyamines, thereby producing cross-linked or aminated proteins, respectively. Involved in many biological processes, such as bone development, angiogenesis, wound healing, cellular differentiation, chromatin modification and apoptosis. Acts as a protein-glutamine gamma-glutamyltransferase by mediating the cross-linking of proteins: under physiological conditions, the protein cross-linking activity is inhibited by GTP; inhibition is relieved by Ca(2+) in response to various stresses. When secreted, catalyzes cross-linking of proteins of the extracellular matrix, resulting in the formation of scaffolds. Plays a key role during apoptosis, both by (1) promoting the cross-linking of cytoskeletal proteins resulting in condensation of the cytoplasm, and by (2) mediating cross-linking proteins of the extracellular matrix, resulting in the irreversible formation of scaffolds that stabilize the integrity of the dying cells before their clearance by phagocytosis, thereby preventing the leakage of harmful intracellular components. In addition to protein cross-linking, can use different monoamine substrates to catalyze a vast array of protein post-translational modifications: mediates aminylation of serotonin, dopamine, noradrenaline or histamine into glutamine residues of target proteins to generate protein serotonylation, dopaminylation, noradrenalinylation or histaminylation, respectively. Mediates protein serotonylation of small GTPases during activation and aggregation of platelets, leading to constitutive activation of these GTPases. Plays a key role in chromatin organization by mediating serotonylation and dopaminylation of histone H3. Catalyzes serotonylation of 'Gln-5' of histone H3 (H3Q5ser) during serotonergic neuron differentiation, thereby facilitating transcription. Acts as a mediator of neurotransmission-independent role of nuclear dopamine in ventral tegmental area (VTA) neurons: catalyzes dopaminylation of 'Gln-5' of histone H3 (H3Q5dop), thereby regulating relapse-related transcriptional plasticity in the reward system. Also acts as a protein deamidase by mediating the side chain deamidation of specific glutamine residues of proteins to glutamate. May also act as an isopeptidase cleaving the previously formed cross-links. Also able to participate in signaling pathways independently of its acyltransferase activity: acts as a signal transducer in alpha-1 adrenergic receptor-mediated stimulation of phospholipase C-delta (PLCD) activity and is required for coupling alpha-1 adrenergic agonists to the stimulation of phosphoinositide lipid metabolism. In Gallus gallus (Chicken), this protein is Protein-glutamine gamma-glutamyltransferase 2.